The sequence spans 290 residues: Poly-beta-1,6-N-acetyl-D-glucosamine N-deacetylase (290 aa).

Positions 1-28 (MKYRKLIILVLSILIILPVSTLDGHHIA) are cleaved as a signal peptide. In terms of domain architecture, NodB homology spans 114–290 (RSVWINFDDM…KRWDGFHEKD (177 aa)).

Belongs to the polysaccharide deacetylase family.

The protein resides in the secreted. Its subcellular location is the cell wall. In terms of biological role, catalyzes the N-deacetylation of poly-beta-1,6-N-acetyl-D-glucosamine (PNAG, also referred to as PIA), a biofilm adhesin polysaccharide. N-deacetylation is crucial for attachment of the polysaccharide to the bacterial cell surface; it leads to the introduction of positive charges in the otherwise neutral PIA polymer, allowing electrostatic interactions. This Staphylococcus aureus (strain MRSA252) protein is Poly-beta-1,6-N-acetyl-D-glucosamine N-deacetylase (icaB).